Reading from the N-terminus, the 352-residue chain is Protein RecA (352 aa).

Position 68–75 (68–75 (GPESSGKT)) interacts with ATP.

Belongs to the RecA family.

It localises to the cytoplasm. Functionally, can catalyze the hydrolysis of ATP in the presence of single-stranded DNA, the ATP-dependent uptake of single-stranded DNA by duplex DNA, and the ATP-dependent hybridization of homologous single-stranded DNAs. It interacts with LexA causing its activation and leading to its autocatalytic cleavage. In Clostridium perfringens (strain SM101 / Type A), this protein is Protein RecA.